A 369-amino-acid polypeptide reads, in one-letter code: Mitogen-activated protein kinase 4 (369 aa).

Residues 32–319 (YVPIKPIGRG…VTEALEHPYM (288 aa)) enclose the Protein kinase domain. Residues 38–46 (IGRGAYGIV) and lysine 61 each bind ATP. Aspartate 158 serves as the catalytic Proton acceptor. Threonine 191 bears the Phosphothreonine mark. The TXY motif lies at 191 to 193 (TEY). At tyrosine 193 the chain carries Phosphotyrosine.

Belongs to the protein kinase superfamily. CMGC Ser/Thr protein kinase family. MAP kinase subfamily. In terms of processing, dually phosphorylated on Thr-191 and Tyr-193, which activates the enzyme. In terms of tissue distribution, expressed in leaves and panicles.

The enzyme catalyses L-seryl-[protein] + ATP = O-phospho-L-seryl-[protein] + ADP + H(+). The catalysed reaction is L-threonyl-[protein] + ATP = O-phospho-L-threonyl-[protein] + ADP + H(+). Activated by threonine and tyrosine phosphorylation. This Oryza sativa subsp. japonica (Rice) protein is Mitogen-activated protein kinase 4 (MPK4).